A 122-amino-acid chain; its full sequence is Large ribosomal subunit protein uL14 (122 aa).

The protein belongs to the universal ribosomal protein uL14 family. In terms of assembly, part of the 50S ribosomal subunit. Forms a cluster with proteins L3 and L19. In the 70S ribosome, L14 and L19 interact and together make contacts with the 16S rRNA in bridges B5 and B8.

Binds to 23S rRNA. Forms part of two intersubunit bridges in the 70S ribosome. This chain is Large ribosomal subunit protein uL14, found in Chlamydia pneumoniae (Chlamydophila pneumoniae).